A 202-amino-acid polypeptide reads, in one-letter code: Cytochrome c oxidase assembly protein CtaG (202 aa).

Over 1–14 the chain is Cytoplasmic; the sequence is MTSPANPSEVTRDR. A helical; Signal-anchor for type II membrane protein transmembrane segment spans residues 15–37; it reads RNRGVAFVCAGVFVAMVGMSFAA. The Periplasmic segment spans residues 38-202; it reads VPLYRLFCQV…GAAKTQKLGG (165 aa).

The protein belongs to the COX11/CtaG family.

Its subcellular location is the cell inner membrane. Functionally, exerts its effect at some terminal stage of cytochrome c oxidase synthesis, probably by being involved in the insertion of the copper B into subunit I. This is Cytochrome c oxidase assembly protein CtaG from Chelativorans sp. (strain BNC1).